The chain runs to 197 residues: Putative early 21.8 kDa protein (197 aa).

This protein is required for viral late gene expression. The chain is Putative early 21.8 kDa protein (DA26) from Orgyia pseudotsugata (Douglas-fir tussock moth).